Reading from the N-terminus, the 240-residue chain is LexA repressor (240 aa).

Positions 26–46 (FDEMKDALDLKSKSGIHRLIT) form a DNA-binding region, H-T-H motif. Residues serine 161 and lysine 199 each act as for autocatalytic cleavage activity in the active site.

Belongs to the peptidase S24 family. In terms of assembly, homodimer.

The enzyme catalyses Hydrolysis of Ala-|-Gly bond in repressor LexA.. Functionally, represses a number of genes involved in the response to DNA damage (SOS response), including recA and lexA. In the presence of single-stranded DNA, RecA interacts with LexA causing an autocatalytic cleavage which disrupts the DNA-binding part of LexA, leading to derepression of the SOS regulon and eventually DNA repair. The chain is LexA repressor from Methylobacterium nodulans (strain LMG 21967 / CNCM I-2342 / ORS 2060).